The primary structure comprises 179 residues: Endoribonuclease YbeY (179 aa).

Positions 141, 145, and 151 each coordinate Zn(2+).

Belongs to the endoribonuclease YbeY family. It depends on Zn(2+) as a cofactor.

The protein resides in the cytoplasm. Functionally, single strand-specific metallo-endoribonuclease involved in late-stage 70S ribosome quality control and in maturation of the 3' terminus of the 16S rRNA. In Synechocystis sp. (strain ATCC 27184 / PCC 6803 / Kazusa), this protein is Endoribonuclease YbeY.